Here is a 410-residue protein sequence, read N- to C-terminus: MSDIKKAVLAYSGGLDTSVILKWLQDTYGCEIVTFTADLGQGEELEPARAKALQFGIKPENIFIDDLREEFVRDFVFPMFRANTIYEGEYLLGTSIARPLIAKRQIEIARLTGADAVSHGATGKGNDQVRFELGYYALEPGIKVIAPWREWDLLSREKLMAYAEKHGIPVEMKHKQGGSPYSMDANLLHISYEGRHLENPNAEAEESMWRWTVSPEKAPDAPEIIEIEFRAGDPVAIDGKAYKPHELLAELNRIGGKHGIGRLDLVENRFVGMKSRGCYETPGGTILLKAHRGIESITLDREVAHLKDDLMPRYASLIYNGLWWAPERLALQTLIDHTQQAVNGVVRLKLYKGSVSVISRDSANTLFDQNIATFDDDGGAYNQADAGGFIKLNALRMRIAETAKRKRAQK.

ATP contacts are provided by residues 10–18 (AYSGGLDTS) and alanine 37. L-citrulline contacts are provided by tyrosine 90 and serine 95. Residue glycine 120 coordinates ATP. Residues threonine 122, asparagine 126, and aspartate 127 each coordinate L-aspartate. Asparagine 126 contributes to the L-citrulline binding site. The L-citrulline site is built by arginine 130, serine 182, serine 191, glutamate 267, and tyrosine 279.

Belongs to the argininosuccinate synthase family. Type 1 subfamily. Homotetramer.

It is found in the cytoplasm. The catalysed reaction is L-citrulline + L-aspartate + ATP = 2-(N(omega)-L-arginino)succinate + AMP + diphosphate + H(+). Its pathway is amino-acid biosynthesis; L-arginine biosynthesis; L-arginine from L-ornithine and carbamoyl phosphate: step 2/3. The chain is Argininosuccinate synthase from Polynucleobacter asymbioticus (strain DSM 18221 / CIP 109841 / QLW-P1DMWA-1) (Polynucleobacter necessarius subsp. asymbioticus).